The primary structure comprises 177 residues: N5-carboxyaminoimidazole ribonucleotide mutase (177 aa).

Residues S18, D21, and R48 each contribute to the substrate site.

It belongs to the AIR carboxylase family. Class I subfamily.

It catalyses the reaction 5-carboxyamino-1-(5-phospho-D-ribosyl)imidazole + H(+) = 5-amino-1-(5-phospho-D-ribosyl)imidazole-4-carboxylate. It functions in the pathway purine metabolism; IMP biosynthesis via de novo pathway; 5-amino-1-(5-phospho-D-ribosyl)imidazole-4-carboxylate from 5-amino-1-(5-phospho-D-ribosyl)imidazole (N5-CAIR route): step 2/2. Its function is as follows. Catalyzes the conversion of N5-carboxyaminoimidazole ribonucleotide (N5-CAIR) to 4-carboxy-5-aminoimidazole ribonucleotide (CAIR). This chain is N5-carboxyaminoimidazole ribonucleotide mutase, found in Pyrococcus horikoshii (strain ATCC 700860 / DSM 12428 / JCM 9974 / NBRC 100139 / OT-3).